The chain runs to 201 residues: Phosphoheptose isomerase 2 (201 aa).

The SIS domain maps to 39 to 198 (VIKAYKNGNK…EEELFGKGFS (160 aa)). 54–56 (NGG) serves as a coordination point for substrate. Residues His-63 and Glu-67 each coordinate Zn(2+). Residues Glu-67, 96-97 (ND), 122-124 (STS), Ser-127, and Gln-174 contribute to the substrate site. Zn(2+) is bound by residues Gln-174 and His-182.

It belongs to the SIS family. GmhA subfamily. As to quaternary structure, homotetramer. The cofactor is Zn(2+).

Its subcellular location is the cytoplasm. The catalysed reaction is 2 D-sedoheptulose 7-phosphate = D-glycero-alpha-D-manno-heptose 7-phosphate + D-glycero-beta-D-manno-heptose 7-phosphate. The protein operates within carbohydrate biosynthesis; D-glycero-D-manno-heptose 7-phosphate biosynthesis; D-glycero-alpha-D-manno-heptose 7-phosphate and D-glycero-beta-D-manno-heptose 7-phosphate from sedoheptulose 7-phosphate: step 1/1. Its pathway is capsule biogenesis; capsule polysaccharide biosynthesis. In terms of biological role, catalyzes the isomerization of sedoheptulose 7-phosphate in D-glycero-D-manno-heptose 7-phosphate. No activity with L-galacto-heptulose, L-galacto-heptulose 7-phosphate or D-manno-heptulose. The protein is Phosphoheptose isomerase 2 of Campylobacter jejuni subsp. jejuni serotype O:2 (strain ATCC 700819 / NCTC 11168).